Consider the following 202-residue polypeptide: Adapter protein MecA 2 (202 aa).

It belongs to the MecA family. Homodimer.

In terms of biological role, enables the recognition and targeting of unfolded and aggregated proteins to the ClpC protease or to other proteins involved in proteolysis. Acts negatively in the development of competence by binding ComK and recruiting it to the ClpCP protease. When overexpressed, inhibits sporulation. Also involved in Spx degradation by ClpC. This is Adapter protein MecA 2 (mecA2) from Bacillus anthracis.